The following is a 334-amino-acid chain: UDP-glucose 4-epimerase (334 aa).

NAD(+) contacts are provided by residues Tyr-11–Ile-12, Asp-31–Gly-36, Asp-50–Ile-51, Phe-72–Ser-76, Asn-91, Thr-116, Tyr-140, Lys-144, and Phe-168. Residues Thr-116 and Tyr-140 each coordinate substrate. Tyr-140 serves as the catalytic Proton acceptor. Substrate-binding positions include Asn-169, His-188–Leu-189, Ala-205–Phe-207, Arg-220, and Arg-281–Asp-284.

It belongs to the NAD(P)-dependent epimerase/dehydratase family. Homodimer. NAD(+) is required as a cofactor.

It carries out the reaction UDP-alpha-D-glucose = UDP-alpha-D-galactose. Its pathway is carbohydrate metabolism; galactose metabolism. Involved in the metabolism of galactose. Catalyzes the conversion of UDP-galactose (UDP-Gal) to UDP-glucose (UDP-Glc) through a mechanism involving the transient reduction of NAD. The protein is UDP-glucose 4-epimerase (galE) of Halalkalibacterium halodurans (strain ATCC BAA-125 / DSM 18197 / FERM 7344 / JCM 9153 / C-125) (Bacillus halodurans).